The primary structure comprises 87 residues: Phosphoribosyl-ATP pyrophosphatase (87 aa).

Belongs to the PRA-PH family.

It is found in the cytoplasm. The catalysed reaction is 1-(5-phospho-beta-D-ribosyl)-ATP + H2O = 1-(5-phospho-beta-D-ribosyl)-5'-AMP + diphosphate + H(+). It participates in amino-acid biosynthesis; L-histidine biosynthesis; L-histidine from 5-phospho-alpha-D-ribose 1-diphosphate: step 2/9. The protein is Phosphoribosyl-ATP pyrophosphatase of Salinibacter ruber (strain DSM 13855 / M31).